Here is a 322-residue protein sequence, read N- to C-terminus: Polyisoprenyl-teichoic acid--peptidoglycan teichoic acid transferase TagT (322 aa).

The Cytoplasmic portion of the chain corresponds to Met-1–Lys-19. A helical; Signal-anchor for type II membrane protein transmembrane segment spans residues Val-20 to Phe-40. Residues Val-41 to Val-322 are Extracellular-facing.

This sequence belongs to the LytR/CpsA/Psr (LCP) family. Interacts with MreB.

It localises to the cell membrane. Its pathway is cell wall biogenesis. May catalyze the final step in cell wall teichoic acid biosynthesis, the transfer of the anionic cell wall polymers (APs) from their lipid-linked precursor to the cell wall peptidoglycan (PG). The protein is Polyisoprenyl-teichoic acid--peptidoglycan teichoic acid transferase TagT of Bacillus subtilis (strain 168).